The following is a 332-amino-acid chain: MILGIESSCDDSSIALMDENSLKLNYFSKISQEIKHAKFGGVVPELAARLHTKALPEMIEKIKPYFSEISAIAVTNEPGLSVSLIGGVSMAKALSISLNKPLIAVNHLVGHIFSVFLDKKEIFPLGVLLVSGGHTLVLDISANGKISVLAKTGDDSFGESFDKVAKMLGLDYPGGALIENLAKNCDGNLNFTIPLLHDKRLEYSFSGLKNQVRMEIEKAGEISQSVQENIAASFQKTAIAHIMDKLSKIYEMKKWQNFAVVGGASANSALRTKLENLANKYGSTLHLAPLKFCSDNAAMIARAGVYKYNKKEFINYKNLDIVPHLNYENFKI.

Residues His107 and His111 each coordinate Fe cation. Substrate-binding positions include 129–133 (LVSGG), Asp162, Gly175, and Asn267. Asp295 contacts Fe cation.

This sequence belongs to the KAE1 / TsaD family. Requires Fe(2+) as cofactor.

It localises to the cytoplasm. The enzyme catalyses L-threonylcarbamoyladenylate + adenosine(37) in tRNA = N(6)-L-threonylcarbamoyladenosine(37) in tRNA + AMP + H(+). Its function is as follows. Required for the formation of a threonylcarbamoyl group on adenosine at position 37 (t(6)A37) in tRNAs that read codons beginning with adenine. Is involved in the transfer of the threonylcarbamoyl moiety of threonylcarbamoyl-AMP (TC-AMP) to the N6 group of A37, together with TsaE and TsaB. TsaD likely plays a direct catalytic role in this reaction. In Campylobacter hominis (strain ATCC BAA-381 / DSM 21671 / CCUG 45161 / LMG 19568 / NCTC 13146 / CH001A), this protein is tRNA N6-adenosine threonylcarbamoyltransferase.